A 318-amino-acid polypeptide reads, in one-letter code: Acetyl-coenzyme A carboxylase carboxyl transferase subunit alpha (318 aa).

The 262-residue stretch at 32–293 folds into the CoA carboxyltransferase C-terminal domain; that stretch reads DLSQEIESLE…KKALQKHLGE (262 aa).

The protein belongs to the AccA family. In terms of assembly, acetyl-CoA carboxylase is a heterohexamer composed of biotin carboxyl carrier protein (AccB), biotin carboxylase (AccC) and two subunits each of ACCase subunit alpha (AccA) and ACCase subunit beta (AccD).

Its subcellular location is the cytoplasm. The enzyme catalyses N(6)-carboxybiotinyl-L-lysyl-[protein] + acetyl-CoA = N(6)-biotinyl-L-lysyl-[protein] + malonyl-CoA. It functions in the pathway lipid metabolism; malonyl-CoA biosynthesis; malonyl-CoA from acetyl-CoA: step 1/1. Component of the acetyl coenzyme A carboxylase (ACC) complex. First, biotin carboxylase catalyzes the carboxylation of biotin on its carrier protein (BCCP) and then the CO(2) group is transferred by the carboxyltransferase to acetyl-CoA to form malonyl-CoA. The sequence is that of Acetyl-coenzyme A carboxylase carboxyl transferase subunit alpha from Syntrophomonas wolfei subsp. wolfei (strain DSM 2245B / Goettingen).